Consider the following 561-residue polypeptide: MNINVADLLNGNYILLLFVVLALGLCLGKLRLGSVQLGNSIGVLVVSLLLGQQHFSINTDALNLGFMLFIFCVGVEAGPNFFSIFFRDGKNYLMLALVMVGSALIIALGLGKLFGWDIGLTAGMLAGSMTSTPVLVGAGDTLRHSGMEGSQLSVALDHLSLGYALTYLIGLVSLIVAARYLPKLQHQDLQTSAQQIARERGLDTDTKRKVYLPVIRAYRVGPELVAWADGKNLRELGIYRQTGCYIERIRRNGILANPDGDAVLQMGDDIALVGYPDAHARLDPSFRNGKEVFDRDLLDMRIVTEEIVVKNHNAVGRRLAQLKLTDHGCFLNRVIRSQIEMPIDDNVVLNKGDVLQVSGDARRVKTVADRIGFISIHSQVTDLLAFCAFFIVGLMIGMITFQFSNFSFGVGNAAGLLFAGIMLGFLRANHPTFGYIPQGALNMVKEFGLMVFMAGVGLSAGSGIGHSLGAVGWQMLVAGLIVSLLPVVICFLFGAYVLRMNRAMLFGAMMGARTCAPAMEIISDTARSNIPALGYAGTYAIANVLLTLAGTLIIIIWPGLG.

Helical transmembrane passes span 8 to 28 (LLNG…LCLG), 32 to 52 (LGSV…LLGQ), 66 to 86 (FMLF…SIFF), 94 to 114 (MLAL…GKLF), and 158 to 178 (HLSL…IVAA). RCK C-terminal domains follow at residues 202 to 288 (LDTD…SFRN) and 292 to 373 (VFDR…RIGF). The next 5 helical transmembrane spans lie at 383-403 (LLAF…TFQF), 406-426 (FSFG…LGFL), 447-467 (FGLM…IGHS), 475-495 (MLVA…LFGA), and 540-560 (AIAN…WPGL).

Belongs to the AAE transporter (TC 2.A.81) family. YbjL subfamily.

The protein localises to the cell membrane. This chain is Putative transport protein Ent638_1362, found in Enterobacter sp. (strain 638).